A 557-amino-acid polypeptide reads, in one-letter code: Protein NRT1/ PTR FAMILY 5.14 (557 aa).

The next 2 membrane-spanning stretches (helical) occupy residues 35-55 (AALF…GIGS) and 78-98 (AWSG…DAFL). T103 is subject to Phosphothreonine. The next 10 helical transmembrane spans lie at 104–124 (IIIS…SAFL), 133–153 (SSTS…VAIG), 183–203 (FFNW…LVVV), 209–229 (FSWA…LVLF), 320–340 (IPVW…MTFF), 357–377 (IPPA…VPIY), 401–421 (IGTG…VEFK), 443–463 (IWWL…TLVG), 479–499 (IGLA…SLLI), and 526–546 (YFYW…LFIS).

This sequence belongs to the major facilitator superfamily. Proton-dependent oligopeptide transporter (POT/PTR) (TC 2.A.17) family. In terms of tissue distribution, expressed in roots.

It localises to the membrane. This Arabidopsis thaliana (Mouse-ear cress) protein is Protein NRT1/ PTR FAMILY 5.14 (NPF5.14).